Here is a 395-residue protein sequence, read N- to C-terminus: Probable eukaryotic translation initiation factor 5 (395 aa).

Residue 28-35 participates in GTP binding; the sequence is GKGNGIKT. 2 disordered regions span residues 146 to 171 and 374 to 395; these read PPAKKKSHKHKRDSPVAEEEDGAEDE and LAEASDESESEDEEEEEEDDDE. The span at 147–157 shows a compositional bias: basic residues; that stretch reads PAKKKSHKHKR. Acidic residues-rich tracts occupy residues 161–170 and 377–395; these read VAEEEDGAED and ASDESESEDEEEEEEDDDE. Residues 228–384 enclose the W2 domain; sequence EEAESSRYDQ…AEASDESESE (157 aa).

The protein belongs to the eIF-2-beta/eIF-5 family. Monomer.

Catalyzes the hydrolysis of GTP bound to the 40S ribosomal initiation complex (40S.mRNA.Met-tRNA[F].eIF-2.GTP) with the subsequent joining of a 60S ribosomal subunit resulting in the release of eIF-2 and the guanine nucleotide. The subsequent joining of a 60S ribosomal subunit results in the formation of a functional 80S initiation complex (80S.mRNA.Met-tRNA[F]). In Schizosaccharomyces pombe (strain 972 / ATCC 24843) (Fission yeast), this protein is Probable eukaryotic translation initiation factor 5 (tif5).